The chain runs to 616 residues: Chaperone protein HscA (616 aa).

The protein belongs to the heat shock protein 70 family.

Functionally, chaperone involved in the maturation of iron-sulfur cluster-containing proteins. Has a low intrinsic ATPase activity which is markedly stimulated by HscB. Involved in the maturation of IscU. The chain is Chaperone protein HscA from Escherichia coli O6:H1 (strain CFT073 / ATCC 700928 / UPEC).